Reading from the N-terminus, the 606-residue chain is METHIGSVDGAAAAADNGAVGCPASAVGCPMTSARPAPVSAGEASLGRHLARRLVQVGVSDVFAVPGDFNLTLLDHLIAEPGLRLVGCCNELNAGYAADGYARARGVGACAVTFTVGGLSVLNAIAGAYSENLPVICIAGGPNSNDYGTNRILHHTIGLPDFSQELRCFQTVTCHQAVVTNLEDAHEQIDTAIATALRESKPVYLSISCNLPGLPHPTFSRDPVPFFLAPRLSNKMGLEAAVEATVEFLNKAVKPVLVGGPKLRVAKAGKAFVDLVDASGYAYAVMPSAKGLVPETHPHFIGTYWGAVSTAFCAEIVESADAYLFAGPIFNDYSSVGYSFLLKKDKAIIVQPERVIVGNGPAFGCVMMKEFLSELAKRVNKNTTAYENYKRIFVPEGQPLESEPNEPLRVNVLFKHVQKMLNSDSAVIAETGDSWFNCQKLKLPEGCGYEFQMQYGSIGWSVGALLGYAQGAKDKRVIACIGDGSFQVTAQDVSTMIRCAQNSIIFLINNGGYTIEVEIHDGPYNVIKNWNYTGLVDAIHNGEGKCWTSKVKCEEELTEAIGMALGEKKDCLCFIEVIAHKDDTSKELLEWGSRVSAANSRPPNPQ.

Residues Asp-68 and His-155 each contribute to the substrate site. A thiamine pyrophosphate binding region spans residues 433-515 (DSWFNCQKLK…FLINNGGYTI (83 aa)). Asp-483, Asn-510, and Gly-512 together coordinate Mg(2+). Glu-516 provides a ligand contact to substrate.

This sequence belongs to the TPP enzyme family. In terms of assembly, homotetramer. Requires a metal cation as cofactor. Thiamine diphosphate is required as a cofactor.

The catalysed reaction is a 2-oxocarboxylate + H(+) = an aldehyde + CO2. This chain is Pyruvate decarboxylase 2 (PDC2), found in Oryza sativa subsp. indica (Rice).